Reading from the N-terminus, the 112-residue chain is Putative membrane protein insertion efficiency factor (112 aa).

It belongs to the UPF0161 family.

The protein resides in the cell inner membrane. Could be involved in insertion of integral membrane proteins into the membrane. The chain is Putative membrane protein insertion efficiency factor from Bradyrhizobium diazoefficiens (strain JCM 10833 / BCRC 13528 / IAM 13628 / NBRC 14792 / USDA 110).